The primary structure comprises 619 residues: MNETIACTPESAVFEAPQLQFNEEGWGPCELPDAFKDIPYQPFSKSDRLGKISDWTGTAQTDKKYPNKYASQFGGGNQYAYYHEEDETTFHLVDSARIQKQPHQRGRFRGNLRNQRGRGRGGRGGVQAGGMTTLSKNATKGRDQRRGTTRKWGARPPPKIRDASVAVRPDWVTVEEMDFPRLSKLSLPNVEKGEDITTCGTLEYYDKTYDRVNVKNEKPLQRVDRIFHTVTTTDDPVIRLLSKSHGNVYATDAILATIMCCTRSNYSWDIVIEKIGDKLFMDKRDNTEFDLLTVNETAIEPPNEDGNSLNSPRNLAIEATFINHNFSQQVLKSGEKEPKYKFDQPNPFIGDDEDGEVASVAYRYRKWDLNNGIELVARCEHDAVLLTPQGDTQFLTIKALNEWDSKVANGVEWRQKLDTQRGAVLANELRNNSCKLAKWTVQALLAGSDQIKFGYVSRAHVRDSSRHVILGTQQFKPQEFANQINLSMDNAWGILRCIIDICMKQKDGKYLIMKDPNKPMIRLYDIPDNTFESDGEEEEGDDGEAFQTYAYGPSAATTAAATAAANAATAAAAVAAAAAAAAAAATTTPAATETVATATTEATTPTTATKTTAPAAAQK.

Residues 99–160 (QKQPHQRGRF…KWGARPPPKI (62 aa)) form a disordered region. Residues 100-121 (KQPHQRGRFRGNLRNQRGRGRG) are compositionally biased toward basic residues. Positions 288–302 (EFDLLTVNETAIEPP) are RNA gate. The disordered stretch occupies residues 588–619 (TPAATETVATATTEATTPTTATKTTAPAAAQK).

This sequence belongs to the eIF-3 subunit D family. In terms of assembly, component of the eukaryotic translation initiation factor 3 (eIF-3) complex.

Its subcellular location is the cytoplasm. MRNA cap-binding component of the eukaryotic translation initiation factor 3 (eIF-3) complex, which is involved in protein synthesis of a specialized repertoire of mRNAs and, together with other initiation factors, stimulates binding of mRNA and methionyl-tRNAi to the 40S ribosome. The eIF-3 complex specifically targets and initiates translation of a subset of mRNAs involved in cell proliferation. In the eIF-3 complex, eif3d specifically recognizes and binds the 7-methylguanosine cap of a subset of mRNAs. The chain is Eukaryotic translation initiation factor 3 subunit D from Aedes aegypti (Yellowfever mosquito).